A 460-amino-acid polypeptide reads, in one-letter code: Ribosomal protein uS12 methylthiotransferase RimO (460 aa).

One can recognise an MTTase N-terminal domain in the interval 16-130; that stretch reads NKIHFISLGC…ILSAIESKEA (115 aa). Residues Cys-25, Cys-61, Cys-93, Cys-164, Cys-168, and Cys-171 each contribute to the [4Fe-4S] cluster site. In terms of domain architecture, Radical SAM core spans 150-382; that stretch reads STPKHYAYLK…SQTQKKNVEK (233 aa). Residues 385-455 enclose the TRAM domain; the sequence is KQLVGQIVEA…GYDLVGRVIK (71 aa).

The protein belongs to the methylthiotransferase family. RimO subfamily. Requires [4Fe-4S] cluster as cofactor.

It localises to the cytoplasm. The enzyme catalyses L-aspartate(89)-[ribosomal protein uS12]-hydrogen + (sulfur carrier)-SH + AH2 + 2 S-adenosyl-L-methionine = 3-methylsulfanyl-L-aspartate(89)-[ribosomal protein uS12]-hydrogen + (sulfur carrier)-H + 5'-deoxyadenosine + L-methionine + A + S-adenosyl-L-homocysteine + 2 H(+). In terms of biological role, catalyzes the methylthiolation of an aspartic acid residue of ribosomal protein uS12. This is Ribosomal protein uS12 methylthiotransferase RimO from Chlamydia caviae (strain ATCC VR-813 / DSM 19441 / 03DC25 / GPIC) (Chlamydophila caviae).